The sequence spans 442 residues: Cytokine receptor-like factor 3 (442 aa).

At methionine 1 the chain carries N-acetylmethionine. Positions glutamate 10–glutamine 57 form a coiled coil. Residues proline 181–proline 274 enclose the Fibronectin type-III domain.

The protein belongs to the cytokine receptor-like factor 3 family. In terms of tissue distribution, expressed in several embryonic and adult tissues, including adult and fetal brain, liver, spleen and pancreas. Expressed in adult, but not fetal kidney. Expressed in skin and squamous cell carcinoma (SCC) and in several other cancer types. Also detected in lesion actinic keratosis (AK).

It is found in the cytoplasm. Its function is as follows. May play a role in the negative regulation of cell cycle progression. The sequence is that of Cytokine receptor-like factor 3 (CRLF3) from Homo sapiens (Human).